Reading from the N-terminus, the 499-residue chain is Putative alpha-galactosidase 8 (499 aa).

2 N-linked (GlcNAc...) asparagine glycosylation sites follow: asparagine 154 and asparagine 191. The active-site Nucleophile is the aspartate 238. Residue asparagine 256 is glycosylated (N-linked (GlcNAc...) asparagine). Aspartate 303 (proton donor) is an active-site residue.

The protein belongs to the glycosyl hydrolase 27 family.

The protein resides in the secreted. The catalysed reaction is Hydrolysis of terminal, non-reducing alpha-D-galactose residues in alpha-D-galactosides, including galactose oligosaccharides, galactomannans and galactolipids.. Functionally, putative alpha-galactosidase involved in the degradation of simple oligosaccharides like melibiose, raffinose and stachyose, and of polymeric galacto(gluco)mannans. In Emericella nidulans (strain FGSC A4 / ATCC 38163 / CBS 112.46 / NRRL 194 / M139) (Aspergillus nidulans), this protein is Putative alpha-galactosidase 8 (agl8).